We begin with the raw amino-acid sequence, 953 residues long: Atromentin synthetase invA2 (953 aa).

An adenylation (A) domain region spans residues 38–460 (RAVSQYPNHE…SGRIKDTVIV (423 aa)). The Carrier domain maps to 592–670 (APSTETEKTL…SLAKYVDSLI (79 aa)). Residues 597 to 667 (TEKTLAGIYA…VISSLAKYVD (71 aa)) are thiolation and peptide carrier (T) domain. Position 629 is an O-(pantetheine 4'-phosphoryl)serine (S629). Residues 693–795 (PIFMVHPGVG…FTGLINIPPH (103 aa)) are thioesterase (TE) domain.

This sequence belongs to the ATP-dependent AMP-binding enzyme family.

The protein operates within secondary metabolite biosynthesis. In terms of biological role, an L-tyrosine:2-oxoglutarate aminotransferase (probably invD) and atromentin synthetase invA2 catalyze consecutive steps to turn over L-tyrosine into atromentin, which represents the generic precursor molecule for the entire terphenylquinone and pulvinic acid family of pigments, which are widely distributed secondary metabolites in homobasidiomycetes. The first step catalyzed by the aminotransferase converts L-tyrosine in to 4-hydroxyphenylpyruvate (4-HPP). Adenylation of two 4-HPP monomers by the invA2 adenylation (A) domain, covalent tethering of the monomers as a thioester and oxoester onto the invA2 thiolation (T) and thioesterase (TE) domains, respectively, and symmetric C-C-bond formation between two monomers catalyzed by the invA2 TE domain leads to atromentin. This chain is Atromentin synthetase invA2 (invA2), found in Paxillus involutus (Naked brimcap).